The following is a 56-amino-acid chain: MKKVIMLLLIFALFAYALSASDPNKCLKKGSKCVSVGKPCCKPATCNIYANRCIGW.

Positions 1-19 (MKKVIMLLLIFALFAYALS) are cleaved as a signal peptide. 3 disulfide bridges follow: Cys26/Cys41, Cys33/Cys46, and Cys40/Cys53.

Belongs to the limacoditoxin-22 family. In terms of tissue distribution, expressed by the venom secretory cell of the spine. The spine is a cuticular structure containing a single large nucleated venom-secreting cell at its base. It is an independent unit capable of producing, storing and injecting venom. On the back of D.vulnerans caterpillars, spines are grouped together by 50 to 100 to form scoli, of which there are eight in D.vulnerans.

Its subcellular location is the secreted. Probable toxin. Shows a moderate antiparasitic activity against the major pathogenic nematode of ruminants (H.contortus, IC(50)=22.1 uM). Does not show insecticidal activities. Does not induce increase in intracellular calcium in mouse DRG neurons, suggesting that it does not induce pain. The sequence is that of U-limacoditoxin(3)-Dv21 from Doratifera vulnerans (Mottled cup moth).